Reading from the N-terminus, the 160-residue chain is S-adenosylmethionine decarboxylase proenzyme (160 aa).

Ser73 serves as the catalytic Schiff-base intermediate with substrate; via pyruvic acid. Pyruvic acid (Ser); by autocatalysis is present on Ser73. His78 acts as the Proton acceptor; for processing activity in catalysis. The Proton donor; for catalytic activity role is filled by Cys93.

This sequence belongs to the prokaryotic AdoMetDC family. Type 1 subfamily. Heterotetramer of two alpha and two beta chains arranged as a dimer of alpha/beta heterodimers. Requires pyruvate as cofactor. Post-translationally, is synthesized initially as an inactive proenzyme. Formation of the active enzyme involves a self-maturation process in which the active site pyruvoyl group is generated from an internal serine residue via an autocatalytic post-translational modification. Two non-identical subunits are generated from the proenzyme in this reaction, and the pyruvate is formed at the N-terminus of the alpha chain, which is derived from the carboxyl end of the proenzyme. The post-translation cleavage follows an unusual pathway, termed non-hydrolytic serinolysis, in which the side chain hydroxyl group of the serine supplies its oxygen atom to form the C-terminus of the beta chain, while the remainder of the serine residue undergoes an oxidative deamination to produce ammonia and the pyruvoyl group blocking the N-terminus of the alpha chain.

The enzyme catalyses S-adenosyl-L-methionine + H(+) = S-adenosyl 3-(methylsulfanyl)propylamine + CO2. The protein operates within amine and polyamine biosynthesis; S-adenosylmethioninamine biosynthesis; S-adenosylmethioninamine from S-adenosyl-L-methionine: step 1/1. In terms of biological role, catalyzes the decarboxylation of S-adenosylmethionine to S-adenosylmethioninamine (dcAdoMet), the propylamine donor required for the synthesis of the polyamines spermine and spermidine from the diamine putrescine. This is S-adenosylmethionine decarboxylase proenzyme from Pseudomonas aeruginosa (strain LESB58).